A 110-amino-acid chain; its full sequence is Defensin-like protein 296 (110 aa).

The first 28 residues, 1–28 (MASKITIFFVLALVVVCTMMVCIPTATA), serve as a signal peptide directing secretion. 6 disulfides stabilise this stretch: Cys34/Cys52, Cys40/Cys57, Cys45/Cys59, Cys81/Cys102, Cys87/Cys107, and Cys95/Cys109.

This sequence belongs to the DEFL family.

The protein resides in the secreted. This Arabidopsis thaliana (Mouse-ear cress) protein is Defensin-like protein 296.